The chain runs to 168 residues: Transcriptional regulator MraZ (168 aa).

SpoVT-AbrB domains are found at residues 8–51 (EYNQ…GGDR) and 90–140 (ALNM…KADI).

It belongs to the MraZ family. As to quaternary structure, forms oligomers.

It localises to the cytoplasm. The protein localises to the nucleoid. This is Transcriptional regulator MraZ from Cereibacter sphaeroides (strain KD131 / KCTC 12085) (Rhodobacter sphaeroides).